We begin with the raw amino-acid sequence, 379 residues long: Succinyl-diaminopimelate desuccinylase (379 aa).

His-70 provides a ligand contact to Zn(2+). Residue Asp-72 is part of the active site. Asp-103 contributes to the Zn(2+) binding site. Catalysis depends on Glu-137, which acts as the Proton acceptor. Residues Glu-138, Glu-166, and His-352 each contribute to the Zn(2+) site.

Belongs to the peptidase M20A family. DapE subfamily. Homodimer. It depends on Zn(2+) as a cofactor. The cofactor is Co(2+).

The catalysed reaction is N-succinyl-(2S,6S)-2,6-diaminopimelate + H2O = (2S,6S)-2,6-diaminopimelate + succinate. It functions in the pathway amino-acid biosynthesis; L-lysine biosynthesis via DAP pathway; LL-2,6-diaminopimelate from (S)-tetrahydrodipicolinate (succinylase route): step 3/3. Its function is as follows. Catalyzes the hydrolysis of N-succinyl-L,L-diaminopimelic acid (SDAP), forming succinate and LL-2,6-diaminopimelate (DAP), an intermediate involved in the bacterial biosynthesis of lysine and meso-diaminopimelic acid, an essential component of bacterial cell walls. This chain is Succinyl-diaminopimelate desuccinylase, found in Shewanella baltica (strain OS195).